The chain runs to 82 residues: Small ribosomal subunit protein bS16 (82 aa).

Belongs to the bacterial ribosomal protein bS16 family.

This is Small ribosomal subunit protein bS16 from Aeromonas hydrophila subsp. hydrophila (strain ATCC 7966 / DSM 30187 / BCRC 13018 / CCUG 14551 / JCM 1027 / KCTC 2358 / NCIMB 9240 / NCTC 8049).